A 422-amino-acid polypeptide reads, in one-letter code: Synaptotagmin-1 (422 aa).

Over 1 to 57 (MVSESHHEALAAPPVTTVATVLPHNATEPASPGEGKEDAFSKLKEKFMNELHKIPLP) the chain is Vesicular. N-linked (GlcNAc...) asparagine glycosylation is present at asparagine 25. The helical transmembrane segment at 58–80 (PWALIAIAIVAVLLVLTCCFCIC) threads the bilayer. 5 S-palmitoyl cysteine lipidation sites follow: cysteine 75, cysteine 76, cysteine 78, cysteine 80, and cysteine 83. The Cytoplasmic segment spans residues 81 to 422 (KKCLFKKKNK…EVDAMLAVKK (342 aa)). Positions 113–142 (TMKDQALKDDDAETGLTDGEEKEEPKEEEK) are disordered. The span at 122–134 (DDAETGLTDGEEK) shows a compositional bias: acidic residues. A Phosphothreonine modification is found at threonine 129. Residues 136-382 (EPKEEEKLGK…AIGKVFVGYN (247 aa)) are phospholipid binding. In terms of domain architecture, C2 1 spans 142–261 (KLGKLQYSLD…DFGHVTEEWR (120 aa)). Residues leucine 172, aspartate 173, and aspartate 179 each coordinate Ca(2+). Tyrosine 230 carries the post-translational modification Phosphotyrosine. 6 residues coordinate Ca(2+): aspartate 231, phenylalanine 232, aspartate 233, serine 236, lysine 237, and aspartate 239. Phosphoserine is present on serine 265. Positions 273–406 (KLGDICFSLR…NPRRPIAQWH (134 aa)) constitute a C2 2 domain. Residues aspartate 304 and aspartate 310 each coordinate Ca(2+). A phosphoserine mark is found at serine 343 and serine 345. Ca(2+) is bound by residues aspartate 364, aspartate 366, and aspartate 372.

This sequence belongs to the synaptotagmin family. In terms of assembly, homotetramer. Heterodimer; heterodimerizes with SYT2 in presence of calcium. Interacts with SCAMP5. Interacts with STON2. Forms a complex with SV2B, syntaxin 1 and SNAP25. Interacts with SV2A, SV2B and SV2C. Interacts with RIMS1. Interacts with PRRT2. Interacts with DNAJC5 in a phosphorylation-dependent manner. Interacts (via N-terminus) with RAB3A. Interacts with SYT12. Interacts with calmodulin. Interacts with DNM1 (via C-terminal proline-rich domain (PRD)); this interaction facilitates vesicle fission during clathrin-mediated endocytosis (CME). It depends on Ca(2+) as a cofactor. Post-translationally, glycosylated.

Its subcellular location is the cytoplasmic vesicle. The protein resides in the secretory vesicle membrane. It is found in the secretory vesicle. The protein localises to the synaptic vesicle membrane. It localises to the chromaffin granule membrane. Its subcellular location is the cytoplasm. In terms of biological role, calcium sensor that participates in triggering neurotransmitter release at the synapse. May have a regulatory role in the membrane interactions during trafficking of synaptic vesicles at the active zone of the synapse. It binds acidic phospholipids with a specificity that requires the presence of both an acidic head group and a diacyl backbone. A Ca(2+)-dependent interaction between synaptotagmin and putative receptors for activated protein kinase C has also been reported. It can bind to at least three additional proteins in a Ca(2+)-independent manner; these are neurexins, syntaxin and AP2. Plays a role in dendrite formation by melanocytes. The chain is Synaptotagmin-1 from Bos taurus (Bovine).